Consider the following 329-residue polypeptide: Cysteine synthase (329 aa).

At K48 the chain carries N6-(pyridoxal phosphate)lysine. Pyridoxal 5'-phosphate contacts are provided by residues N78, 183-187 (GTGGT), and S278.

Belongs to the cysteine synthase/cystathionine beta-synthase family. In terms of assembly, homodimer. Pyridoxal 5'-phosphate serves as cofactor.

The catalysed reaction is O-acetyl-L-serine + hydrogen sulfide = L-cysteine + acetate. It participates in amino-acid biosynthesis; L-cysteine biosynthesis; L-cysteine from L-serine: step 2/2. Its function is as follows. Catalyzes the conversion of O-acetylserine (OAS) to cysteine through the elimination of acetate and addition of hydrogen sulfide. This is Cysteine synthase (srpG) from Synechococcus elongatus (strain ATCC 33912 / PCC 7942 / FACHB-805) (Anacystis nidulans R2).